We begin with the raw amino-acid sequence, 105 residues long: Large ribosomal subunit protein uL23 (105 aa).

The protein belongs to the universal ribosomal protein uL23 family. Part of the 50S ribosomal subunit. Contacts protein L29, and trigger factor when it is bound to the ribosome.

Its function is as follows. One of the early assembly proteins it binds 23S rRNA. One of the proteins that surrounds the polypeptide exit tunnel on the outside of the ribosome. Forms the main docking site for trigger factor binding to the ribosome. This chain is Large ribosomal subunit protein uL23, found in Herminiimonas arsenicoxydans.